The chain runs to 351 residues: Blue-sensitive opsin (351 aa).

Residues 1 to 40 are Extracellular-facing; it reads MKQVPEFHEDFYIPIPLDINNLSAYSPFLVPQDHLGNQGI. N-linked (GlcNAc...) asparagine glycosylation is present at N21. Residues 41 to 65 traverse the membrane as a helical segment; sequence FMAMSVFMFFIFIGGASINILTILC. At 66–77 the chain is on the cytoplasmic side; sequence TIQFKKLRSHLN. The helical transmembrane segment at 78–103 threads the bilayer; that stretch reads YILVNLSIANLFVAIFGSPLSFYSFF. Over 104-117 the chain is Extracellular; sequence NRYFIFGATACKIE. C114 and C191 are joined by a disulfide. A helical membrane pass occupies residues 118–137; sequence GFLATLGGMVGLWSLAVVAF. Over 138-156 the chain is Cytoplasmic; sequence ERWLVICKPLGNFTFKTPH. The helical transmembrane segment at 157–180 threads the bilayer; that stretch reads AIAGCILPWISALAASLPPLFGWS. The Extracellular segment spans residues 181–206; the sequence is RYIPEGLQCSCGPDWYTTNNKYNNES. A helical membrane pass occupies residues 207-234; that stretch reads YVMFLFCFCFAVPFGTIVFCYGQLLITL. The Cytoplasmic portion of the chain corresponds to 235 to 256; it reads KLAAKAQADSASTQKAEREVTK. A helical transmembrane segment spans residues 257 to 280; sequence MVVVMVLGFLVCWAPYASFSLWIV. Topologically, residues 281 to 288 are extracellular; it reads SHRGEEFD. A helical transmembrane segment spans residues 289–313; the sequence is LRMATIPSCLSKASTVYNPVIYVLM. The residue at position 300 (K300) is an N6-(retinylidene)lysine. At 314–351 the chain is on the cytoplasmic side; the sequence is NKQFRSCMMKMVCGKNIEEDEASTSSQVTQVSSVAPEK.

It belongs to the G-protein coupled receptor 1 family. Opsin subfamily. Post-translationally, phosphorylated on some or all of the serine and threonine residues present in the C-terminal region. In terms of tissue distribution, the color pigments are found in the cone photoreceptor cells.

It localises to the membrane. Its function is as follows. Visual pigments are the light-absorbing molecules that mediate vision. They consist of an apoprotein, opsin, covalently linked to cis-retinal. This Carassius auratus (Goldfish) protein is Blue-sensitive opsin.